Reading from the N-terminus, the 478-residue chain is Cytochrome c-552 (478 aa).

The N-terminal stretch at 1-26 is a signal peptide; the sequence is MARKTLRARRFFSLIFPFFFITSVYA. Histidine 94 serves as a coordination point for heme c. Heme is bound by residues cysteine 122, cysteine 125, and lysine 126. 6 residues coordinate heme c: cysteine 160, cysteine 163, histidine 164, cysteine 209, cysteine 212, and histidine 213. Residues glutamate 215, tyrosine 216, lysine 261, and glutamine 263 each contribute to the Ca(2+) site. Substrate is bound at residue tyrosine 216. Histidine 264 contacts substrate. Histidine 275, cysteine 282, cysteine 285, histidine 286, histidine 301, cysteine 314, cysteine 317, histidine 318, and histidine 393 together coordinate heme c.

The protein belongs to the cytochrome c-552 family. Ca(2+) is required as a cofactor. Requires heme c as cofactor.

The protein localises to the periplasm. The enzyme catalyses 6 Fe(III)-[cytochrome c] + NH4(+) + 2 H2O = 6 Fe(II)-[cytochrome c] + nitrite + 8 H(+). It functions in the pathway nitrogen metabolism; nitrate reduction (assimilation). Functionally, catalyzes the reduction of nitrite to ammonia, consuming six electrons in the process. The sequence is that of Cytochrome c-552 from Salmonella agona (strain SL483).